Consider the following 266-residue polypeptide: MFSVLISLYNKEKPENLEQCLESLHQQTLNADEIVLVYDGPVSESLKAVATRWANLLPLVIVPLEKNLGLGKALNAGLERCTHNVVARMDTDDICLPERFEKQISYMESHPEVVLSGAAVIEFDEHGKERLKRLPLSNNDIHQFARMKNPFNHMCVVFRKDKVISAGSYQHHLYMEDYNLWLRIMSLGHPVANLPDVLMKVRAGSDMVNKRRGWNYIKSEVQLYRLKLALKQTGFIRGTLYFLIRTMTRLMPVKVMQFLYEKDRKG.

Belongs to the glycosyltransferase 2 family.

It functions in the pathway glycan metabolism; exopolysaccharide biosynthesis. Involved in the biosynthesis of amylovoran which functions as a virulence factor. The protein is Amylovoran biosynthesis glycosyltransferase AmsE (amsE) of Erwinia amylovora (Fire blight bacteria).